The sequence spans 282 residues: Casein kinase II subunit beta-2 (282 aa).

Positions M1–E92 are disordered. Residues E13 to P28 show a composition bias toward basic and acidic residues. 2 stretches are compositionally biased toward polar residues: residues S29–V47 and R61–S71. Residues D75–E92 are compositionally biased toward acidic residues.

The protein belongs to the casein kinase 2 subunit beta family. In terms of assembly, heterotetramer of two catalytic alpha subunits and two regulatory beta subunits. Interacts with CCA1. Phosphorylated by alpha subunit.

The protein localises to the cytoplasm. Its subcellular location is the cytosol. It is found in the nucleus. Its function is as follows. Plays a complex role in regulating the basal catalytic activity of the alpha subunit. The tetrameric holoenzyme CK2, composed of two alpha and two beta subunits, phosphorylates the transcription factor PIF1 after an exposure to light, resulting in a proteasome-dependent degradation of PIF1 and promotion of photomorphogenesis. CK2 phosphorylates translation initiation factors. May participate in the regulation of the initiation of translation. This chain is Casein kinase II subunit beta-2 (CKB2), found in Arabidopsis thaliana (Mouse-ear cress).